We begin with the raw amino-acid sequence, 216 residues long: Transmembrane protein 163a (216 aa).

The Cytoplasmic segment spans residues methionine 1 to alanine 15. Residues leucine 16–valine 36 form a helical membrane-spanning segment. At serine 37–alanine 43 the chain is on the extracellular side. The helical transmembrane segment at serine 44 to tryptophan 64 threads the bilayer. The Cytoplasmic segment spans residues arginine 65–arginine 77. A helical transmembrane segment spans residues glutamate 78–glycine 98. Residues lysine 99–aspartate 114 lie on the Extracellular side of the membrane. Residues phenylalanine 115–phenylalanine 135 form a helical membrane-spanning segment. Topologically, residues methionine 136 to arginine 144 are cytoplasmic. A helical transmembrane segment spans residues alanine 145–isoleucine 165. Residues serine 166 to threonine 182 lie on the Extracellular side of the membrane. Residues isoleucine 183–isoleucine 203 form a helical membrane-spanning segment. Over proline 204–glutamate 216 the chain is Cytoplasmic.

Belongs to the TMEM163 family.

Its subcellular location is the cytoplasmic vesicle. The protein resides in the secretory vesicle. It is found in the synaptic vesicle membrane. It localises to the early endosome membrane. The protein localises to the late endosome membrane. Its subcellular location is the lysosome membrane. The protein resides in the cell membrane. It carries out the reaction Zn(2+)(in) = Zn(2+)(out). Its function is as follows. Zinc ion transporter that mediates zinc efflux and plays a crucial role in intracellular zinc homeostasis. Binds the divalent cations Zn(2+), Ni(2+), and to a minor extent Cu(2+). Is a functional modulator of P2X purinoceptors, including P2RX1, P2RX3, P2RX4 and P2RX7. Plays a role in central nervous system development and is required for myelination, and survival and proliferation of oligodendrocytes. The protein is Transmembrane protein 163a of Danio rerio (Zebrafish).